The following is a 173-amino-acid chain: MGDLPWAPPEAQAPSTAGAGDVAEHQVAPARFLQGAWRQAAGWLCRETGAAPGSAQAGPPETAHAADPQPRGPQAPPRLPPSLSPERVHPGQPAAPAEPAPGAPALRSGPSQPRGLRLPVPVPACAGSSAPGSPAALPDSYPWPPPARNRPATLPPTSRVSPLAAFLASAPQR.

Disordered stretches follow at residues methionine 1–alanine 23 and threonine 48–arginine 173. The segment covering glycine 49–proline 60 has biased composition (low complexity). Residues proline 70–leucine 83 show a composition bias toward pro residues. Over residues proline 123–alanine 136 the composition is skewed to low complexity.

This is an uncharacterized protein from Homo sapiens (Human).